Consider the following 31-residue polypeptide: Cyclotide cter-J (31 aa).

The cyclopeptide (Gly-Asp) cross-link spans 1–31; sequence GTVPCGESCVFIPCITGIAGCSCKNKVCYID. Intrachain disulfides connect cysteine 5–cysteine 21, cysteine 9–cysteine 23, and cysteine 14–cysteine 28.

Post-translationally, contains 3 disulfide bonds. In terms of processing, this is a cyclic peptide.

Probably participates in a plant defense mechanism. The sequence is that of Cyclotide cter-J from Clitoria ternatea (Butterfly pea).